The chain runs to 289 residues: MITIKCKDTNLDPLPVKIGIIGGSGLDDPDILEQRQERVVETPYGEPSDALIEGEINGVQCVLLARHGRKHDIMPSNVNYRANIWALRDVGCTHLIVSTACGSLREEIKPGNLVVPHDFIDRTTKRLQTFYDGKAQSPRGVCHLPMFPAFSERTRNILLQAAKELEIPAHDKATIVTIEGPRFSSRSESHMFRQWGGDLINMTTCPEVVLAKEAGLLYGSVAIATDYDCWRMGCEGVNVQDVLRTFAENVIKVKKILVNAVGRIAKEDWSEDILNAKQCVCNNTMSGAM.

Residues Ser24, 66-67 (RH), and 99-100 (TA) each bind phosphate. Met202 contributes to the substrate binding site. Thr203 provides a ligand contact to phosphate. 226-228 (DYD) lines the substrate pocket.

It belongs to the PNP/MTAP phosphorylase family. MTAP subfamily. In terms of assembly, homotrimer. In embryos, expressed in the fat body and visceral mesoderm.

The protein resides in the cytoplasm. The protein localises to the nucleus. The catalysed reaction is S-methyl-5'-thioadenosine + phosphate = 5-(methylsulfanyl)-alpha-D-ribose 1-phosphate + adenine. It participates in amino-acid biosynthesis; L-methionine biosynthesis via salvage pathway; S-methyl-5-thio-alpha-D-ribose 1-phosphate from S-methyl-5'-thioadenosine (phosphorylase route): step 1/1. Functionally, catalyzes the reversible phosphorylation of S-methyl-5'-thioadenosine (MTA) to adenine and 5-methylthioribose-1-phosphate. Involved in the breakdown of MTA, a major by-product of polyamine biosynthesis. Responsible for the first step in the methionine salvage pathway after MTA has been generated from S-adenosylmethionine. Has broad substrate specificity with 6-aminopurine nucleosides as preferred substrates. The sequence is that of S-methyl-5'-thioadenosine phosphorylase (Mtap) from Drosophila melanogaster (Fruit fly).